A 186-amino-acid chain; its full sequence is Ribosome-recycling factor (186 aa).

It belongs to the RRF family.

It localises to the cytoplasm. Responsible for the release of ribosomes from messenger RNA at the termination of protein biosynthesis. May increase the efficiency of translation by recycling ribosomes from one round of translation to another. The sequence is that of Ribosome-recycling factor from Chlorobium phaeovibrioides (strain DSM 265 / 1930) (Prosthecochloris vibrioformis (strain DSM 265)).